A 221-amino-acid chain; its full sequence is N-(5'-phosphoribosyl)anthranilate isomerase (221 aa).

It belongs to the TrpF family.

It catalyses the reaction N-(5-phospho-beta-D-ribosyl)anthranilate = 1-(2-carboxyphenylamino)-1-deoxy-D-ribulose 5-phosphate. Its pathway is amino-acid biosynthesis; L-tryptophan biosynthesis; L-tryptophan from chorismate: step 3/5. In Chlorobaculum parvum (strain DSM 263 / NCIMB 8327) (Chlorobium vibrioforme subsp. thiosulfatophilum), this protein is N-(5'-phosphoribosyl)anthranilate isomerase.